A 503-amino-acid polypeptide reads, in one-letter code: Aromatase (503 aa).

Asp309 and Met374 together coordinate substrate. Position 437 (Cys437) interacts with heme.

It belongs to the cytochrome P450 family. It depends on heme as a cofactor.

It localises to the membrane. The catalysed reaction is testosterone + 3 reduced [NADPH--hemoprotein reductase] + 3 O2 = 17beta-estradiol + formate + 3 oxidized [NADPH--hemoprotein reductase] + 4 H2O + 4 H(+). It catalyses the reaction androst-4-ene-3,17-dione + 3 reduced [NADPH--hemoprotein reductase] + 3 O2 = estrone + formate + 3 oxidized [NADPH--hemoprotein reductase] + 4 H2O + 4 H(+). Functionally, catalyzes the formation of aromatic C18 estrogens from C19 androgens. This Callithrix jacchus (White-tufted-ear marmoset) protein is Aromatase (CYP19A1).